The primary structure comprises 764 residues: 5-methyltetrahydropteroyltriglutamate--homocysteine methyltransferase (764 aa).

Residues 16–19 (RELK) and K112 each bind 5-methyltetrahydropteroyltri-L-glutamate. Residues 431–433 (IGS) and E484 contribute to the L-homocysteine site. L-methionine-binding positions include 431 to 433 (IGS) and E484. Residues 515-516 (RC) and W561 contribute to the 5-methyltetrahydropteroyltri-L-glutamate site. Residue D599 participates in L-homocysteine binding. D599 is a binding site for L-methionine. Residue E605 coordinates 5-methyltetrahydropteroyltri-L-glutamate. 3 residues coordinate Zn(2+): H641, C643, and E665. H694 (proton donor) is an active-site residue. C726 contacts Zn(2+).

It belongs to the vitamin-B12 independent methionine synthase family. It depends on Zn(2+) as a cofactor.

The catalysed reaction is 5-methyltetrahydropteroyltri-L-glutamate + L-homocysteine = tetrahydropteroyltri-L-glutamate + L-methionine. It participates in amino-acid biosynthesis; L-methionine biosynthesis via de novo pathway; L-methionine from L-homocysteine (MetE route): step 1/1. Its function is as follows. Catalyzes the transfer of a methyl group from 5-methyltetrahydrofolate to homocysteine resulting in methionine formation. This is 5-methyltetrahydropteroyltriglutamate--homocysteine methyltransferase from Paraburkholderia phytofirmans (strain DSM 17436 / LMG 22146 / PsJN) (Burkholderia phytofirmans).